Reading from the N-terminus, the 273-residue chain is 4-hydroxy-tetrahydrodipicolinate reductase (273 aa).

NAD(+) is bound at residue 12–17 (GAMGRM). Lys39 is a binding site for NADP(+). NAD(+) is bound by residues 102 to 104 (GTT) and 126 to 129 (ASNF). His159 serves as the catalytic Proton donor/acceptor. His160 serves as a coordination point for (S)-2,3,4,5-tetrahydrodipicolinate. Lys163 acts as the Proton donor in catalysis. 169-170 (GT) lines the (S)-2,3,4,5-tetrahydrodipicolinate pocket.

It belongs to the DapB family. In terms of assembly, homotetramer.

Its subcellular location is the cytoplasm. The catalysed reaction is (S)-2,3,4,5-tetrahydrodipicolinate + NAD(+) + H2O = (2S,4S)-4-hydroxy-2,3,4,5-tetrahydrodipicolinate + NADH + H(+). The enzyme catalyses (S)-2,3,4,5-tetrahydrodipicolinate + NADP(+) + H2O = (2S,4S)-4-hydroxy-2,3,4,5-tetrahydrodipicolinate + NADPH + H(+). It participates in amino-acid biosynthesis; L-lysine biosynthesis via DAP pathway; (S)-tetrahydrodipicolinate from L-aspartate: step 4/4. Its function is as follows. Catalyzes the conversion of 4-hydroxy-tetrahydrodipicolinate (HTPA) to tetrahydrodipicolinate. This chain is 4-hydroxy-tetrahydrodipicolinate reductase, found in Buchnera aphidicola subsp. Schizaphis graminum (strain Sg).